The following is an 858-amino-acid chain: Elongation factor 2 (858 aa).

The tr-type G domain occupies 17–362; that stretch reads ANIRNMSVIA…MITIHLPSPV (346 aa). 26–33 contacts GTP; it reads AHVDHGKS. A Phosphothreonine modification is found at Thr54. Residue Thr57 is modified to Phosphothreonine; by EEF2K. Phosphothreonine is present on Thr59. Position 152 is an N6-succinyllysine (Lys152). Residues 158 to 161 and 216 to 218 contribute to the GTP site; these read NKMD and SGL. N6-acetyllysine is present on Lys235. Residue Lys239 is modified to N6-acetyllysine; alternate. Lys239 is covalently cross-linked (Glycyl lysine isopeptide (Lys-Gly) (interchain with G-Cter in SUMO1); alternate). The residue at position 265 (Tyr265) is a Phosphotyrosine; by CSK. The residue at position 272 (Lys272) is an N6-acetyllysine; alternate. The residue at position 272 (Lys272) is an N6-succinyllysine; alternate. N6-acetyllysine is present on Lys275. Lys322 is covalently cross-linked (Glycyl lysine isopeptide (Lys-Gly) (interchain with G-Cter in SUMO)). Residue Ser325 is modified to Phosphoserine. Phosphotyrosine; by CSK is present on Tyr373. Position 435 is a phosphothreonine (Thr435). Lys439 and Lys445 each carry N6-acetyllysine. Ser502 bears the Phosphoserine mark. Lys525 carries the post-translational modification N6,N6,N6-trimethyllysine; by EEF2KMT. Residue Lys529 forms a Glycyl lysine isopeptide (Lys-Gly) (interchain with G-Cter in SUMO) linkage. Residue Lys572 is modified to N6-succinyllysine. Ser595 bears the Phosphoserine; by CDK2 mark. Position 619 is an N6-acetyllysine (Lys619). The residue at position 715 (His715) is a Diphthamide.

This sequence belongs to the TRAFAC class translation factor GTPase superfamily. Classic translation factor GTPase family. EF-G/EF-2 subfamily. In terms of assembly, binds to 80S ribosomes. Actively translating ribosomes show mutually exclusive binding of eIF5a (EIF5A or EIF5A2) and EEF2/eEF2. Interacts with SERBP1; interaction sequesters EEF2/eEF2 at the A-site of the ribosome, thereby blocking the interaction sites of the mRNA-tRNA complex, promoting ribosome stabilization and hibernation. Interacts with HABP4; interaction takes place at the A-site of hibernating ribosomes and promotes ribosome stabilization. Component of the mRNA surveillance SURF complex, at least composed of ERF1, ERF3 (ERF3A or ERF3B), EEF2, UPF1/RENT1, SMG1, SMG8 and SMG9. Interacts with RBPMS2. In terms of processing, phosphorylation by EF-2 kinase completely inactivates EF-2; it requires prior phosphorylation by CDK2 at Ser-595 during mitotic prometaphase. Phosphorylation by CSK promotes SUMOylation, proteolytic cleavage, and nuclear translocation if the C-terminal fragment. Diphthamide is 2-[3-carboxyamido-3-(trimethyl-ammonio)propyl]histidine. Post-translationally, ISGylated. In terms of processing, proteolytically processed at two sites following phosphorylation by CSK. SUMOylated following phosphorylation by CSK, promotes proteolytic cleavage.

The protein resides in the cytoplasm. The protein localises to the nucleus. It catalyses the reaction GTP + H2O = GDP + phosphate + H(+). Catalyzes the GTP-dependent ribosomal translocation step during translation elongation. During this step, the ribosome changes from the pre-translocational (PRE) to the post-translocational (POST) state as the newly formed A-site-bound peptidyl-tRNA and P-site-bound deacylated tRNA move to the P and E sites, respectively. Catalyzes the coordinated movement of the two tRNA molecules, the mRNA and conformational changes in the ribosome. This is Elongation factor 2 (EEF2) from Pongo abelii (Sumatran orangutan).